Here is a 215-residue protein sequence, read N- to C-terminus: Orotate phosphoribosyltransferase (215 aa).

Lys26 provides a ligand contact to 5-phospho-alpha-D-ribose 1-diphosphate. 34–35 (FF) is an orotate binding site. Residues 72–73 (YK), Arg99, Lys100, Lys103, His105, and 125–133 (DDVISSGIS) each bind 5-phospho-alpha-D-ribose 1-diphosphate. Positions 129 and 157 each coordinate orotate.

It belongs to the purine/pyrimidine phosphoribosyltransferase family. PyrE subfamily. As to quaternary structure, homodimer. It depends on Mg(2+) as a cofactor.

It carries out the reaction orotidine 5'-phosphate + diphosphate = orotate + 5-phospho-alpha-D-ribose 1-diphosphate. It functions in the pathway pyrimidine metabolism; UMP biosynthesis via de novo pathway; UMP from orotate: step 1/2. In terms of biological role, catalyzes the transfer of a ribosyl phosphate group from 5-phosphoribose 1-diphosphate to orotate, leading to the formation of orotidine monophosphate (OMP). The polypeptide is Orotate phosphoribosyltransferase (Halorhodospira halophila (strain DSM 244 / SL1) (Ectothiorhodospira halophila (strain DSM 244 / SL1))).